The following is a 247-amino-acid chain: D-alanyl-D-alanine dipeptidase (247 aa).

2 residues coordinate Zn(2+): histidine 140 and aspartate 147. Glutamate 215 (proton donor/acceptor) is an active-site residue. A Zn(2+)-binding site is contributed by histidine 218.

The protein belongs to the peptidase M15D family. It depends on Zn(2+) as a cofactor.

The protein localises to the cytoplasm. It carries out the reaction D-alanyl-D-alanine + H2O = 2 D-alanine. Functionally, catalyzes hydrolysis of the D-alanyl-D-alanine dipeptide. May have a role in cell-wall turnover. The chain is D-alanyl-D-alanine dipeptidase from Synechocystis sp. (strain ATCC 27184 / PCC 6803 / Kazusa).